We begin with the raw amino-acid sequence, 390 residues long: GTPase Obg/CgtA (390 aa).

The region spanning 1-159 is the Obg domain; that stretch reads MKFVDEAVIK…RDIRLELLLL (159 aa). One can recognise an OBG-type G domain in the interval 160-333; it reads ADVGMLGMPN…LCMKLAEFMD (174 aa). GTP is bound by residues 166 to 173, 191 to 195, 213 to 216, 283 to 286, and 314 to 316; these read GMPNAGKS, FTTLV, DIPG, NKVD, and SAA. Mg(2+) is bound by residues serine 173 and threonine 193.

This sequence belongs to the TRAFAC class OBG-HflX-like GTPase superfamily. OBG GTPase family. In terms of assembly, monomer. Interacts with SpoT (AC Q9KNM2) in a yeast 2-hybrid assay. It depends on Mg(2+) as a cofactor.

It localises to the cytoplasm. In terms of biological role, depletion experiments lead to gene down regulation and a dramatic increase in ppGpp levels, like those seen in the stringent response. There is no change in cell morphology in depletion experiments, but cells are very sensitive to the DNA-damaging agent hydroxyurea and are very elongated. Overexpression reduces growth and leads to elongated cells. Overexpression of proteins with C-terminal deletions of 29 or 62 amino acids showed fewer elongated cells. Functionally, an essential GTPase which binds GTP, GDP and possibly (p)ppGpp with moderate affinity, with high nucleotide exchange rates and a fairly low GTP hydrolysis rate. It may play a role in control of the cell cycle, stress response, ribosome biogenesis and in those bacteria that undergo differentiation, in morphogenesis control. GTPase activity is stimulated by 50S ribosomal subunits. The protein is GTPase Obg/CgtA of Vibrio cholerae serotype O1 (strain ATCC 39315 / El Tor Inaba N16961).